Here is a 300-residue protein sequence, read N- to C-terminus: 4-hydroxy-tetrahydrodipicolinate synthase (300 aa).

T45 is a binding site for pyruvate. Residue Y140 is the Proton donor/acceptor of the active site. K169 (schiff-base intermediate with substrate) is an active-site residue. I210 is a pyruvate binding site.

This sequence belongs to the DapA family. In terms of assembly, homotetramer; dimer of dimers.

It is found in the cytoplasm. The enzyme catalyses L-aspartate 4-semialdehyde + pyruvate = (2S,4S)-4-hydroxy-2,3,4,5-tetrahydrodipicolinate + H2O + H(+). It participates in amino-acid biosynthesis; L-lysine biosynthesis via DAP pathway; (S)-tetrahydrodipicolinate from L-aspartate: step 3/4. Its function is as follows. Catalyzes the condensation of (S)-aspartate-beta-semialdehyde [(S)-ASA] and pyruvate to 4-hydroxy-tetrahydrodipicolinate (HTPA). This Helicobacter pylori (strain G27) protein is 4-hydroxy-tetrahydrodipicolinate synthase.